Here is a 189-residue protein sequence, read N- to C-terminus: MEHEKLYPGQEALLYSHKIVQLSKALWKTVEKDWQNWIKPFDLNINEHHILWISHALGGASISEIAKYGVMHVSTAFNFSKKLEDRGLLTFSKKETDKRNTYVQLTPEGESLLLETIQAFRPEENGVFRASLPLQELYGKFPELTDISAIVRRLYGDSFMDIFAETSKMITEEADRRPQDPVIDSIKKA.

One can recognise an HTH marR-type domain in the interval 12-156 (ALLYSHKIVQ…ISAIVRRLYG (145 aa)). Positions 62–85 (ISEIAKYGVMHVSTAFNFSKKLED) form a DNA-binding region, H-T-H motif.

Homodimer.

In terms of biological role, negative regulator of protease production and sporulation. In Exiguobacterium sibiricum (strain DSM 17290 / CCUG 55495 / CIP 109462 / JCM 13490 / 255-15), this protein is HTH-type transcriptional regulator Hpr.